A 311-amino-acid polypeptide reads, in one-letter code: Methenyltetrahydromethanopterin cyclohydrolase (311 aa).

Belongs to the MCH family.

It is found in the cytoplasm. It carries out the reaction 5,10-methenyl-5,6,7,8-tetrahydromethanopterin + H2O = N(5)-formyl-5,6,7,8-tetrahydromethanopterin + H(+). Functionally, catalyzes the hydrolysis of methenyl-H(4)MPT(+) to 5-formyl-H(4)MPT. The chain is Methenyltetrahydromethanopterin cyclohydrolase from Halobacterium salinarum (strain ATCC 29341 / DSM 671 / R1).